Consider the following 365-residue polypeptide: tRNA 2-selenouridine synthase (365 aa).

A Rhodanese domain is found at 15 to 138 (FIAGQPLIDL…MRQYLIGVIE (124 aa)). C98 (S-selanylcysteine intermediate) is an active-site residue.

The protein belongs to the SelU family. As to quaternary structure, monomer.

The enzyme catalyses 5-methylaminomethyl-2-thiouridine(34) in tRNA + selenophosphate + (2E)-geranyl diphosphate + H2O + H(+) = 5-methylaminomethyl-2-selenouridine(34) in tRNA + (2E)-thiogeraniol + phosphate + diphosphate. It catalyses the reaction 5-methylaminomethyl-2-thiouridine(34) in tRNA + (2E)-geranyl diphosphate = 5-methylaminomethyl-S-(2E)-geranyl-thiouridine(34) in tRNA + diphosphate. It carries out the reaction 5-methylaminomethyl-S-(2E)-geranyl-thiouridine(34) in tRNA + selenophosphate + H(+) = 5-methylaminomethyl-2-(Se-phospho)selenouridine(34) in tRNA + (2E)-thiogeraniol. The catalysed reaction is 5-methylaminomethyl-2-(Se-phospho)selenouridine(34) in tRNA + H2O = 5-methylaminomethyl-2-selenouridine(34) in tRNA + phosphate. Involved in the post-transcriptional modification of the uridine at the wobble position (U34) of tRNA(Lys), tRNA(Glu) and tRNA(Gln). Catalyzes the conversion of 2-thiouridine (S2U-RNA) to 2-selenouridine (Se2U-RNA). Acts in a two-step process involving geranylation of 2-thiouridine (S2U) to S-geranyl-2-thiouridine (geS2U) and subsequent selenation of the latter derivative to 2-selenouridine (Se2U) in the tRNA chain. The sequence is that of tRNA 2-selenouridine synthase from Shewanella sp. (strain ANA-3).